The primary structure comprises 419 residues: Napsin-A (419 aa).

Positions 1–16 (MSPLLLLLLCLLLGNL) are cleaved as a signal peptide. The Peptidase A1 domain maps to 73–394 (YFGTIGLGTP…KNVGPRVGLA (322 aa)). N-linked (GlcNAc...) asparagine glycosylation occurs at N85. D91 is an active-site residue. A disulfide bond links C104 and C111. Residues N128 and N149 are each glycosylated (N-linked (GlcNAc...) asparagine). The cysteines at positions 269 and 273 are disulfide-linked. The active site involves D278. The cysteines at positions 312 and 349 are disulfide-linked. N-linked (GlcNAc...) asparagine glycosylation occurs at N331. A disordered region spans residues 391–419 (VGLARAQSRSTDRAERRTTQAQFFKRRPG).

It belongs to the peptidase A1 family. Expressed at the highest levels in the kidney, at a moderate level in the lung, and at low levels in the spleen and adipose tissue.

It localises to the secreted. Functionally, may be involved in processing of pneumocyte surfactant precursors. The sequence is that of Napsin-A (Napsa) from Mus musculus (Mouse).